Consider the following 229-residue polypeptide: MAKISKKLSAAYEGIDKQKAYPLFDAIKLAQEKSITKFDGSINIAVKLNLDTTKVEQQLRGSISLPNGNGKNVRVLVLSEDITKEQAAAVGADYFGGADYIQNIEKMLNQIDVIITNQKMMPLLAKLGKVLGPRGLMPNPKIGTVTNDVLKAVEEFKKGRIEYRTDTYGNIHMSIGRVSFETAKIEENANALLSLIRSKKPATVKGQYIQNIAISPTMGPGIKVIINNN.

It belongs to the universal ribosomal protein uL1 family. Part of the 50S ribosomal subunit.

Binds directly to 23S rRNA. The L1 stalk is quite mobile in the ribosome, and is involved in E site tRNA release. Functionally, protein L1 is also a translational repressor protein, it controls the translation of the L11 operon by binding to its mRNA. The protein is Large ribosomal subunit protein uL1 of Ureaplasma urealyticum serovar 10 (strain ATCC 33699 / Western).